The chain runs to 122 residues: Small ribosomal subunit protein uS13 (122 aa).

A disordered region spans residues 94–122 (RGLPVRGQRTKTNARQRKGPRPAIGGRKK).

The protein belongs to the universal ribosomal protein uS13 family. Part of the 30S ribosomal subunit. Forms a loose heterodimer with protein S19. Forms two bridges to the 50S subunit in the 70S ribosome.

In terms of biological role, located at the top of the head of the 30S subunit, it contacts several helices of the 16S rRNA. In the 70S ribosome it contacts the 23S rRNA (bridge B1a) and protein L5 of the 50S subunit (bridge B1b), connecting the 2 subunits; these bridges are implicated in subunit movement. Contacts the tRNAs in the A and P-sites. This Rubrobacter xylanophilus (strain DSM 9941 / JCM 11954 / NBRC 16129 / PRD-1) protein is Small ribosomal subunit protein uS13.